The sequence spans 324 residues: Phospho-N-acetylmuramoyl-pentapeptide-transferase (324 aa).

10 helical membrane passes run threonine 9–valine 29, methionine 54–glycine 74, valine 77–leucine 97, phenylalanine 117–alanine 137, isoleucine 147–serine 167, leucine 176–phenylalanine 196, methionine 201–asparagine 221, isoleucine 227–leucine 247, leucine 253–phenylalanine 273, and valine 304–phenylalanine 324.

It belongs to the glycosyltransferase 4 family. MraY subfamily. Requires Mg(2+) as cofactor.

It localises to the cell membrane. The enzyme catalyses UDP-N-acetyl-alpha-D-muramoyl-L-alanyl-gamma-D-glutamyl-meso-2,6-diaminopimeloyl-D-alanyl-D-alanine + di-trans,octa-cis-undecaprenyl phosphate = di-trans,octa-cis-undecaprenyl diphospho-N-acetyl-alpha-D-muramoyl-L-alanyl-D-glutamyl-meso-2,6-diaminopimeloyl-D-alanyl-D-alanine + UMP. Its pathway is cell wall biogenesis; peptidoglycan biosynthesis. Functionally, catalyzes the initial step of the lipid cycle reactions in the biosynthesis of the cell wall peptidoglycan: transfers peptidoglycan precursor phospho-MurNAc-pentapeptide from UDP-MurNAc-pentapeptide onto the lipid carrier undecaprenyl phosphate, yielding undecaprenyl-pyrophosphoryl-MurNAc-pentapeptide, known as lipid I. This Listeria welshimeri serovar 6b (strain ATCC 35897 / DSM 20650 / CCUG 15529 / CIP 8149 / NCTC 11857 / SLCC 5334 / V8) protein is Phospho-N-acetylmuramoyl-pentapeptide-transferase.